The following is a 582-amino-acid chain: Type I secretion system ATP-binding protein PrsD (582 aa).

Helical transmembrane passes span 22-42 (FIGVGVASALVNLLYLTGSFF), 59-79 (LIALSLLALLLYAFQGAFELI), and 148-168 (IAICFLFHPVIGLIAIIGGLI). An ABC transmembrane type-1 domain is found at 22-301 (FIGVGVASAL…AIGNWRGLVA (280 aa)). The ABC transporter domain maps to 332-568 (LTVEGLASGP…VLRPQQVERQ (237 aa)). 366–373 (GPSASGKS) contacts ATP.

The protein belongs to the ABC transporter superfamily. Part of a type I secretion system composed of PrsD and PrsE.

It localises to the cell inner membrane. Mediates secretion of glycanase ExsH. The chain is Type I secretion system ATP-binding protein PrsD (prsD) from Rhizobium meliloti (strain 1021) (Ensifer meliloti).